The following is a 342-amino-acid chain: Holliday junction branch migration complex subunit RuvB (342 aa).

The interval 1–185 is large ATPase domain (RuvB-L); sequence MREDYLKSDD…FGINARLEYY (185 aa). ATP-binding positions include Leu-24, Arg-25, Gly-66, Lys-69, Thr-70, Thr-71, 132 to 134, Arg-175, Tyr-185, and Arg-222; that span reads EDY. Thr-70 is a Mg(2+) binding site. Positions 186–256 are small ATPAse domain (RuvB-S); it reads DAKLLTRIVQ…IARIALQALN (71 aa). Residues 259 to 342 are head domain (RuvB-H); sequence HNGLDDMDNR…PPAQSGTLFE (84 aa). DNA-binding residues include Arg-314 and Arg-319.

The protein belongs to the RuvB family. Homohexamer. Forms an RuvA(8)-RuvB(12)-Holliday junction (HJ) complex. HJ DNA is sandwiched between 2 RuvA tetramers; dsDNA enters through RuvA and exits via RuvB. An RuvB hexamer assembles on each DNA strand where it exits the tetramer. Each RuvB hexamer is contacted by two RuvA subunits (via domain III) on 2 adjacent RuvB subunits; this complex drives branch migration. In the full resolvosome a probable DNA-RuvA(4)-RuvB(12)-RuvC(2) complex forms which resolves the HJ.

The protein resides in the cytoplasm. It carries out the reaction ATP + H2O = ADP + phosphate + H(+). Its function is as follows. The RuvA-RuvB-RuvC complex processes Holliday junction (HJ) DNA during genetic recombination and DNA repair, while the RuvA-RuvB complex plays an important role in the rescue of blocked DNA replication forks via replication fork reversal (RFR). RuvA specifically binds to HJ cruciform DNA, conferring on it an open structure. The RuvB hexamer acts as an ATP-dependent pump, pulling dsDNA into and through the RuvAB complex. RuvB forms 2 homohexamers on either side of HJ DNA bound by 1 or 2 RuvA tetramers; 4 subunits per hexamer contact DNA at a time. Coordinated motions by a converter formed by DNA-disengaged RuvB subunits stimulates ATP hydrolysis and nucleotide exchange. Immobilization of the converter enables RuvB to convert the ATP-contained energy into a lever motion, pulling 2 nucleotides of DNA out of the RuvA tetramer per ATP hydrolyzed, thus driving DNA branch migration. The RuvB motors rotate together with the DNA substrate, which together with the progressing nucleotide cycle form the mechanistic basis for DNA recombination by continuous HJ branch migration. Branch migration allows RuvC to scan DNA until it finds its consensus sequence, where it cleaves and resolves cruciform DNA. The sequence is that of Holliday junction branch migration complex subunit RuvB from Cytophaga hutchinsonii (strain ATCC 33406 / DSM 1761 / CIP 103989 / NBRC 15051 / NCIMB 9469 / D465).